Reading from the N-terminus, the 236-residue chain is Small ribosomal subunit protein uS3 (236 aa).

The region spanning isoleucine 39 to glycine 112 is the KH type-2 domain. A disordered region spans residues tyrosine 212–arginine 236.

The protein belongs to the universal ribosomal protein uS3 family. In terms of assembly, part of the 30S ribosomal subunit. Forms a tight complex with proteins S10 and S14.

In terms of biological role, binds the lower part of the 30S subunit head. Binds mRNA in the 70S ribosome, positioning it for translation. In Rhodopirellula baltica (strain DSM 10527 / NCIMB 13988 / SH1), this protein is Small ribosomal subunit protein uS3.